Reading from the N-terminus, the 531-residue chain is Transporter mfs1 (531 aa).

The next 10 membrane-spanning stretches (helical) occupy residues 83 to 103 (LVVT…SAIF), 119 to 139 (VPVI…PLIF), 158 to 178 (LIVF…GVLL), 182 to 202 (FLAG…LADI), 214 to 234 (FWSL…AAMV), 241 to 261 (WQFW…TFFM), 325 to 345 (IYIG…PILF), 358 to 378 (LVYM…FIYL), 398 to 418 (ILII…WFGW), and 424 to 444 (VHWI…FLLF). N-linked (GlcNAc...) asparagine glycosylation occurs at asparagine 486. A helical transmembrane segment spans residues 496-516 (GWGSTILGVISCIMIPIPFLI).

This sequence belongs to the major facilitator superfamily. CAR1 family.

It localises to the endoplasmic reticulum. The protein resides in the membrane. The protein is Transporter mfs1 (mfs1) of Schizosaccharomyces pombe (strain 972 / ATCC 24843) (Fission yeast).